The chain runs to 293 residues: Meteorin (293 aa).

The first 23 residues, 1–23 (MGFPAAALLCALCCGLLAPAARA), serve as a signal peptide directing secretion. Cystine bridges form between C30-C51, C82-C118, C171-C242, C174-C266, and C184-C288.

This sequence belongs to the meteorin family. Monomer.

The protein resides in the secreted. Its function is as follows. Involved in both glial cell differentiation and axonal network formation during neurogenesis. Promotes astrocyte differentiation and transforms cerebellar astrocytes into radial glia. Also induces axonal extension in small and intermediate neurons of sensory ganglia by activating nearby satellite glia. The polypeptide is Meteorin (METRN) (Homo sapiens (Human)).